The primary structure comprises 256 residues: Small ribosomal subunit protein eS1 (256 aa).

Alanine 2 is subject to N-acetylalanine; partial.

Belongs to the eukaryotic ribosomal protein eS1 family. In terms of assembly, component of the small ribosomal subunit. Mature ribosomes consist of a small (40S) and a large (60S) subunit. The 40S subunit contains about 33 different proteins and 1 molecule of RNA (18S). The 60S subunit contains about 49 different proteins and 3 molecules of RNA (25S, 5.8S and 5S).

It localises to the cytoplasm. In Candida albicans (strain SC5314 / ATCC MYA-2876) (Yeast), this protein is Small ribosomal subunit protein eS1.